The chain runs to 242 residues: DnaJ homolog subfamily B member 3 (242 aa).

Positions 1-69 (MANYYEVLGV…KKRDVYDRYG (69 aa)) constitute a J domain.

In terms of tissue distribution, testis specific.

Its function is as follows. May operate as a co-chaperone of the male germ cell- and haploid stage-specific Hsp70 proteins. The sequence is that of DnaJ homolog subfamily B member 3 (DNAJB3) from Macaca fuscata fuscata (Japanese macaque).